Reading from the N-terminus, the 709-residue chain is ATP-dependent zinc metalloprotease FtsH (709 aa).

At 1–25 (MKKNKGLNEATTSEKPQFPKRTAWK) the chain is on the cytoplasmic side. The helical transmembrane segment at 26–46 (IFWWVVILAIIIGILVYILMP) threads the bilayer. Topologically, residues 47–171 (RATTAVIEKW…FVAPDTRARD (125 aa)) are extracellular. Residues 172-192 (VLNIFFGLLPIIIFVIFFLLF) traverse the membrane as a helical segment. The Cytoplasmic portion of the chain corresponds to 193–709 (WRSARGISGG…DTEKDSETNS (517 aa)). Residue 268 to 275 (GPPGTGKT) participates in ATP binding. His-490 contacts Zn(2+). The active site involves Glu-491. The Zn(2+) site is built by His-494 and Asp-569. The segment at 673–709 (ILAQKQEQQAKQKAEAKEAKLNKKTEKDTEKDSETNS) is disordered. Positions 680–709 (QQAKQKAEAKEAKLNKKTEKDTEKDSETNS) are enriched in basic and acidic residues.

It in the central section; belongs to the AAA ATPase family. This sequence in the C-terminal section; belongs to the peptidase M41 family. In terms of assembly, homohexamer. The cofactor is Zn(2+).

The protein localises to the cell membrane. In terms of biological role, acts as a processive, ATP-dependent zinc metallopeptidase for both cytoplasmic and membrane proteins. Plays a role in the quality control of integral membrane proteins. In Mycoplasma pneumoniae (strain ATCC 29342 / M129 / Subtype 1) (Mycoplasmoides pneumoniae), this protein is ATP-dependent zinc metalloprotease FtsH.